A 200-amino-acid polypeptide reads, in one-letter code: Snake venom serine protease VaSP1 (200 aa).

In terms of domain architecture, Peptidase S1 spans 1–200 (VIGGDECNIN…EIQGIVSYGK (200 aa)). Active-site charge relay system residues include aspartate 88 and serine 182.

Monomer. Post-translationally, N-glycosylated. The protein exist in multiple isoforms. Expressed by the venom gland.

It is found in the secreted. Its activity is regulated as follows. Inhibited by Pefabloc (90% inhibition), DTT (90%), Zn(2+) (80%), trypsin inhibitor II (50%), and benzamidine (45%), but not inhibited by EDTA, Ca(2+), Mg(2+) and L-Cys. Its function is as follows. Snake venom serine protease active on several blood coagulation enzymes. It completely cleaves fibrinogen Aalpha chain (FGA) after 120 minutes, partially cleaves Bbeta chain (FGB) (overnight) and has no activity on gamma chain. It does not release fibrinopeptides A and/or B exclusively, since the enzyme does not provoke fibrin polymerisation. It also degrades fibrin as efficiently as plasmin, and exhibits potent ability to cleave plasminogen and prothrombin, as well as heavy chain of factor X (F10). In vitro, it cleaves insulin B-chain (at positions His38-Leu39, Ala40-Leu41 and Tyr16-Leu17). The sequence is that of Snake venom serine protease VaSP1 from Vipera ammodytes ammodytes (Western sand viper).